The chain runs to 645 residues: Chlorophyllide a oxygenase, chloroplastic (645 aa).

Residues 1–46 form a disordered region; that stretch reads MLPASLQRKAAAVGGRGPTNQSRVAVRVSAQPKEAPPASTPIVEDP. Residues 105–218 are a coiled coil; that stretch reads QARQKLEYLR…RKASDLDIKE (114 aa). A disordered region spans residues 258–287; that stretch reads ATTVTQEVPSTSYGTPVDRAPRRSKAAIRR. The span at 259 to 271 shows a compositional bias: polar residues; that stretch reads TTVTQEVPSTSYG. The 102-residue stretch at 305–406 folds into the Rieske domain; sequence WYPAEFSARL…CAEKDGFIWV (102 aa). [2Fe-2S] cluster-binding residues include C346, H348, C365, and H368. Fe cation contacts are provided by E446, D450, H453, and H458.

It is found in the plastid. The protein resides in the chloroplast inner membrane. It localises to the chloroplast thylakoid membrane. It carries out the reaction chlorophyllide a + 2 NADPH + 2 O2 + 2 H(+) = chlorophyllide b + 2 NADP(+) + 3 H2O. Its function is as follows. Catalyzes a two-step oxygenase reaction involved in the synthesis of chlorophyll b. Acts specifically on the non-esterified chlorophyllide a and not on chlorophyll a. This chain is Chlorophyllide a oxygenase, chloroplastic (CAO), found in Chlamydomonas reinhardtii (Chlamydomonas smithii).